The primary structure comprises 671 residues: tRNA 5-methylaminomethyl-2-thiouridine biosynthesis bifunctional protein MnmC (671 aa).

Positions 1-245 are tRNA (mnm(5)s(2)U34)-methyltransferase; that stretch reads MVNVMNTLSF…KREMLWGEKP (245 aa). The tract at residues 272–671 is FAD-dependent cmnm(5)s(2)U34 oxidoreductase; sequence VGGGVASLFV…RKLLKGSKVE (400 aa).

In the N-terminal section; belongs to the methyltransferase superfamily. tRNA (mnm(5)s(2)U34)-methyltransferase family. The protein in the C-terminal section; belongs to the DAO family. FAD serves as cofactor.

It is found in the cytoplasm. It carries out the reaction 5-aminomethyl-2-thiouridine(34) in tRNA + S-adenosyl-L-methionine = 5-methylaminomethyl-2-thiouridine(34) in tRNA + S-adenosyl-L-homocysteine + H(+). Catalyzes the last two steps in the biosynthesis of 5-methylaminomethyl-2-thiouridine (mnm(5)s(2)U) at the wobble position (U34) in tRNA. Catalyzes the FAD-dependent demodification of cmnm(5)s(2)U34 to nm(5)s(2)U34, followed by the transfer of a methyl group from S-adenosyl-L-methionine to nm(5)s(2)U34, to form mnm(5)s(2)U34. This is tRNA 5-methylaminomethyl-2-thiouridine biosynthesis bifunctional protein MnmC from Actinobacillus pleuropneumoniae serotype 5b (strain L20).